Here is a 207-residue protein sequence, read N- to C-terminus: dITP/XTP pyrophosphatase (207 aa).

7–12 (SNNAKK) lines the substrate pocket. The active-site Proton acceptor is the aspartate 72. Mg(2+) is bound at residue aspartate 72. Substrate is bound by residues serine 73, 155-158 (FGYD), lysine 183, and 188-189 (HR).

The protein belongs to the HAM1 NTPase family. Homodimer. It depends on Mg(2+) as a cofactor.

It catalyses the reaction XTP + H2O = XMP + diphosphate + H(+). It carries out the reaction dITP + H2O = dIMP + diphosphate + H(+). The catalysed reaction is ITP + H2O = IMP + diphosphate + H(+). Its function is as follows. Pyrophosphatase that catalyzes the hydrolysis of nucleoside triphosphates to their monophosphate derivatives, with a high preference for the non-canonical purine nucleotides XTP (xanthosine triphosphate), dITP (deoxyinosine triphosphate) and ITP. Seems to function as a house-cleaning enzyme that removes non-canonical purine nucleotides from the nucleotide pool, thus preventing their incorporation into DNA/RNA and avoiding chromosomal lesions. In Corynebacterium diphtheriae (strain ATCC 700971 / NCTC 13129 / Biotype gravis), this protein is dITP/XTP pyrophosphatase.